The following is a 1094-amino-acid chain: Probable arabinosyltransferase C (1094 aa).

A run of 13 helical transmembrane segments spans residues Ile-28 to Leu-50, Ala-232 to Leu-251, Pro-264 to Phe-286, Ser-341 to Ser-360, Thr-373 to Leu-392, Ile-431 to Ile-453, Arg-466 to Phe-488, Ser-530 to Leu-552, Ser-565 to Thr-582, Trp-586 to Val-608, Thr-620 to Tyr-642, Trp-657 to Phe-679, and Leu-700 to Ser-722. The span at Gly-817–Gly-831 shows a compositional bias: low complexity. Residues Gly-817–Arg-836 form a disordered region.

It belongs to the emb family.

The protein localises to the cell membrane. In terms of biological role, arabinosyl transferase responsible for the polymerization of arabinose into the arabinan of arabinogalactan. In Mycobacterium tuberculosis (strain ATCC 25618 / H37Rv), this protein is Probable arabinosyltransferase C (embC).